Here is a 377-residue protein sequence, read N- to C-terminus: Alanine racemase (377 aa).

Residue lysine 37 is the Proton acceptor; specific for D-alanine of the active site. Lysine 37 carries the N6-(pyridoxal phosphate)lysine modification. Arginine 135 contacts substrate. The Proton acceptor; specific for L-alanine role is filled by tyrosine 271. Methionine 319 provides a ligand contact to substrate.

Belongs to the alanine racemase family. Requires pyridoxal 5'-phosphate as cofactor.

The enzyme catalyses L-alanine = D-alanine. It functions in the pathway amino-acid biosynthesis; D-alanine biosynthesis; D-alanine from L-alanine: step 1/1. Functionally, catalyzes the interconversion of L-alanine and D-alanine. May also act on other amino acids. The protein is Alanine racemase (alr) of Helicobacter acinonychis (strain Sheeba).